The primary structure comprises 714 residues: Fatty acid oxidation complex subunit alpha (714 aa).

Residues 1 to 190 (MEMASAFTLN…KLGLVDDVVP (190 aa)) are enoyl-CoA hydratase. Positions 306 to 714 (APLNSVGILG…FWKTTATDLQ (409 aa)) are 3-hydroxyacyl-CoA dehydrogenase.

The protein in the N-terminal section; belongs to the enoyl-CoA hydratase/isomerase family. In the central section; belongs to the 3-hydroxyacyl-CoA dehydrogenase family. In terms of assembly, heterotetramer of two alpha chains (FadJ) and two beta chains (FadI).

The protein localises to the cytoplasm. It catalyses the reaction a (3S)-3-hydroxyacyl-CoA = a (2E)-enoyl-CoA + H2O. It carries out the reaction a 4-saturated-(3S)-3-hydroxyacyl-CoA = a (3E)-enoyl-CoA + H2O. The enzyme catalyses a (3S)-3-hydroxyacyl-CoA + NAD(+) = a 3-oxoacyl-CoA + NADH + H(+). The catalysed reaction is (3S)-3-hydroxybutanoyl-CoA = (3R)-3-hydroxybutanoyl-CoA. It functions in the pathway lipid metabolism; fatty acid beta-oxidation. Catalyzes the formation of a hydroxyacyl-CoA by addition of water on enoyl-CoA. Also exhibits 3-hydroxyacyl-CoA epimerase and 3-hydroxyacyl-CoA dehydrogenase activities. This chain is Fatty acid oxidation complex subunit alpha, found in Escherichia coli O127:H6 (strain E2348/69 / EPEC).